The chain runs to 379 residues: Cytochrome b (379 aa).

The next 4 helical transmembrane spans lie at 34–54 (FGSL…LLAM), 78–99 (WFIR…YLHI), 114–134 (WNTG…GYVL), and 179–199 (FFAL…VHLT). Heme b contacts are provided by His-84 and His-98. Heme b is bound by residues His-183 and His-197. An a ubiquinone-binding site is contributed by His-202. The next 4 helical transmembrane spans lie at 227–247 (LKDI…AFFS), 289–309 (LGGV…PLLH), 321–341 (LSQL…WIGS), and 348–368 (FIII…VLFP).

Belongs to the cytochrome b family. In terms of assembly, the cytochrome bc1 complex contains 11 subunits: 3 respiratory subunits (MT-CYB, CYC1 and UQCRFS1), 2 core proteins (UQCRC1 and UQCRC2) and 6 low-molecular weight proteins (UQCRH/QCR6, UQCRB/QCR7, UQCRQ/QCR8, UQCR10/QCR9, UQCR11/QCR10 and a cleavage product of UQCRFS1). This cytochrome bc1 complex then forms a dimer. Requires heme b as cofactor.

It localises to the mitochondrion inner membrane. Component of the ubiquinol-cytochrome c reductase complex (complex III or cytochrome b-c1 complex) that is part of the mitochondrial respiratory chain. The b-c1 complex mediates electron transfer from ubiquinol to cytochrome c. Contributes to the generation of a proton gradient across the mitochondrial membrane that is then used for ATP synthesis. The protein is Cytochrome b (MT-CYB) of Struthio camelus (Common ostrich).